A 553-amino-acid polypeptide reads, in one-letter code: MAAKEVKFGNDARAKMLRGVNVLADAVKVTLGPKGRNVVLDKSFGAPTITKDGVSVAREIELEDKFENMGTQMVKEVASKANDAAGDGTTTATVLAQSIITEGLKAVAAGMNPMDLKRGIDKAVIAAVEELRKLSVPCSDSKAIAQVGTISANSDLTVGKLIAEAMGKVGKEGVITVEEGTGLQDELDVVEGMQFDRGYLSPYFINKPESGAVELENPFILLADKKISNIRELLPILEAVAKAGKSLLIIAEDVEGEALATLIVNTMRGIVKVAAVKAPGFGDRRKAMLQDIATLTGGTVISEEIGLELEKTILDDLGQAKRVVINKDTTIIIDGIGNEINIKGRIAQIHQQIEEATSDYVKEKLQERVAKLADGVAVIKVGAATEVELKEKKGRVEDALHATRAAVEEGVVAGGGVALIRVAGKISNLTGDNEDQNVGIKVALRAMESPLRQIVINAGEEASVIANNVKACEGSYGYNAYTEEYGDMISMGILDPTKVTRSALQYAASVAGLMITTECMITDLPKGETPDLNNSGGMGGGMGGGMGGMGGMM.

ATP-binding positions include 30-33, K51, 87-91, G415, and D495; these read TLGP and DGTTT.

Belongs to the chaperonin (HSP60) family. Forms a cylinder of 14 subunits composed of two heptameric rings stacked back-to-back. Interacts with the co-chaperonin GroES.

It localises to the cytoplasm. The enzyme catalyses ATP + H2O + a folded polypeptide = ADP + phosphate + an unfolded polypeptide.. Together with its co-chaperonin GroES, plays an essential role in assisting protein folding. The GroEL-GroES system forms a nano-cage that allows encapsulation of the non-native substrate proteins and provides a physical environment optimized to promote and accelerate protein folding. This Buchnera aphidicola subsp. Tuberolachnus salignus protein is Chaperonin GroEL.